A 476-amino-acid polypeptide reads, in one-letter code: Aspartyl/glutamyl-tRNA(Asn/Gln) amidotransferase subunit B (476 aa).

The protein belongs to the GatB/GatE family. GatB subfamily. Heterotrimer of A, B and C subunits.

The enzyme catalyses L-glutamyl-tRNA(Gln) + L-glutamine + ATP + H2O = L-glutaminyl-tRNA(Gln) + L-glutamate + ADP + phosphate + H(+). The catalysed reaction is L-aspartyl-tRNA(Asn) + L-glutamine + ATP + H2O = L-asparaginyl-tRNA(Asn) + L-glutamate + ADP + phosphate + 2 H(+). Functionally, allows the formation of correctly charged Asn-tRNA(Asn) or Gln-tRNA(Gln) through the transamidation of misacylated Asp-tRNA(Asn) or Glu-tRNA(Gln) in organisms which lack either or both of asparaginyl-tRNA or glutaminyl-tRNA synthetases. The reaction takes place in the presence of glutamine and ATP through an activated phospho-Asp-tRNA(Asn) or phospho-Glu-tRNA(Gln). The chain is Aspartyl/glutamyl-tRNA(Asn/Gln) amidotransferase subunit B from Oceanobacillus iheyensis (strain DSM 14371 / CIP 107618 / JCM 11309 / KCTC 3954 / HTE831).